The chain runs to 868 residues: Spindle and centriole-associated protein 1 (868 aa).

Disordered stretches follow at residues 129-154 (RTGFPNVTMAPGSSRSPAGINQDPGT), 172-201 (DDGGAESTAHSQSEDSESELPNSLSPHSNR), 229-250 (IAAQSQRTPPGSPSSELSAEDQ), and 291-326 (KPLLSKVKRKQDMRALSKQKKNMLSSSTTSADLASS). 2 stretches are compositionally biased toward polar residues: residues 190–200 (ELPNSLSPHSN) and 229–245 (IAAQSQRTPPGSPSSEL). Phosphothreonine is present on Thr236. The residue at position 240 (Ser240) is a Phosphoserine. Residues 315–326 (SSSTTSADLASS) are compositionally biased toward low complexity. Positions 381-434 (RYLKESETQLRKEVETRQQLEQMLGDHRELIDALTAEILLLREENGAVQARLQQ) form a coiled coil. 2 disordered regions span residues 630–664 (PQFVSLSQPPCSSPPSTQQSRNPVFSEEPTVLGDG) and 702–722 (SSGGEHGDGLREPSRQGNASE). Low complexity predominate over residues 634-649 (SLSQPPCSSPPSTQQS). Position 655 is a phosphoserine (Ser655). The span at 706–715 (EHGDGLREPS) shows a compositional bias: basic and acidic residues. Residues 736-764 (SSMEERIAELNRQSMEARSKLLQLIEQQK) are a coiled coil. Ser772, Ser773, Ser776, and Ser831 each carry phosphoserine. The tract at residues 805–868 (SSKCNTVSPV…GWFALSAHLP (64 aa)) is disordered. Positions 812–831 (SPVSGVSSRRSSGAISNSCS) are enriched in low complexity.

As to quaternary structure, interacts with CEP120.

It localises to the cytoplasm. The protein resides in the cytoskeleton. It is found in the microtubule organizing center. The protein localises to the centrosome. Its subcellular location is the centriole. It localises to the spindle. Regulator required for centriole duplication, for proper bipolar spindle formation and chromosome congression in mitosis. This Rattus norvegicus (Rat) protein is Spindle and centriole-associated protein 1 (Spice1).